The sequence spans 460 residues: V-type ATP synthase beta chain (460 aa).

It belongs to the ATPase alpha/beta chains family.

Its function is as follows. Produces ATP from ADP in the presence of a proton gradient across the membrane. The V-type beta chain is a regulatory subunit. This chain is V-type ATP synthase beta chain, found in Anaeromyxobacter sp. (strain Fw109-5).